We begin with the raw amino-acid sequence, 239 residues long: Uridylate kinase (239 aa).

13-16 (KVSG) contacts ATP. Glycine 55 is a binding site for UMP. ATP contacts are provided by glycine 56 and arginine 60. UMP is bound by residues aspartate 75 and 136 to 143 (TGNPFCTT). Threonine 163, glutamine 164, tyrosine 169, and aspartate 172 together coordinate ATP.

It belongs to the UMP kinase family. As to quaternary structure, homohexamer.

It is found in the cytoplasm. It carries out the reaction UMP + ATP = UDP + ADP. The protein operates within pyrimidine metabolism; CTP biosynthesis via de novo pathway; UDP from UMP (UMPK route): step 1/1. Inhibited by UTP. Catalyzes the reversible phosphorylation of UMP to UDP. The polypeptide is Uridylate kinase (Rickettsia bellii (strain RML369-C)).